The sequence spans 161 residues: Endoribonuclease YbeY (161 aa).

Zn(2+) contacts are provided by H121, H125, and H131.

Belongs to the endoribonuclease YbeY family. Zn(2+) serves as cofactor.

The protein localises to the cytoplasm. Single strand-specific metallo-endoribonuclease involved in late-stage 70S ribosome quality control and in maturation of the 3' terminus of the 16S rRNA. The chain is Endoribonuclease YbeY from Stenotrophomonas maltophilia (strain R551-3).